Consider the following 3214-residue polypeptide: Ciliogenesis and planar polarity effector 1 (3214 aa).

2 consecutive transmembrane segments (helical) span residues 593-613 and 632-652; these read KLML…LQFI and AWVL…YWDM. 11 disordered regions span residues 1496-1523, 1644-1667, 1879-1991, 2047-2142, 2214-2241, 2398-2440, 2491-2529, 2622-2650, 2824-2855, 3037-3127, and 3158-3181; these read VGKK…ETPG, GNQS…PLQS, DGRH…HRAQ, FGES…FPPA, SLSD…SSHC, GITQ…ISND, GSHD…GHEP, TFQS…QSGE, VSLQ…HSSQ, TAPA…CRED, and MSPA…VSES. A compositionally biased stretch (basic and acidic residues) spans 1512 to 1523; sequence NSQRKEDDETPG. Residues 1932 to 1942 are compositionally biased toward basic and acidic residues; sequence QCSRKEPRDAS. 3 stretches are compositionally biased toward polar residues: residues 1943–1953, 1971–1984, and 2047–2068; these read VDTNLTEQKGA, NGAQ…QKTQ, and FGES…SRQR. Over residues 2079 to 2099 the composition is skewed to basic and acidic residues; that stretch reads CTREPGKNSPADHKRISRPDQ. Over residues 2215–2241 the composition is skewed to polar residues; the sequence is LSDSCQPPVSQRTVHTTLPSPSDSSHC. The span at 2500-2514 shows a compositional bias: basic and acidic residues; that stretch reads DPDKEGPSQKADSES. Composition is skewed to polar residues over residues 2515-2524 and 2622-2634; these read SKNPQATAAS and TFQS…STRG. Residues 2830–2848 show a composition bias toward acidic residues; it reads EDVEEQKDAEETSETEFSE. Polar residues predominate over residues 3090-3107; sequence RGSSQLRGSQPPCQSQKP.

Interacts with FUZ; INTU and WDPCP; the interactors are proposed to form the core CPLANE (ciliogenesis and planar polarity effectors) complex.

It is found in the membrane. The protein localises to the cell projection. Its subcellular location is the cilium. Involved in ciliogenesis. Involved in the establishment of cell polarity required for directional cell migration. Proposed to act in association with the CPLANE (ciliogenesis and planar polarity effectors) complex. Involved in recruitment of peripheral IFT-A proteins to basal bodies. The polypeptide is Ciliogenesis and planar polarity effector 1 (Mus musculus (Mouse)).